Reading from the N-terminus, the 410-residue chain is Voltage-dependent chloride channel 1, chloroplastic (410 aa).

Over 1–110 the chain is Lumenal, thylakoid; that stretch reads MYQSMNLSVS…RHLLSSFSSR (110 aa). The chain crosses the membrane as a helical span at residues 111 to 131; that stretch reads VILSLIPPVFFFTSVAVVIAS. Topologically, residues 132-147 are stromal; it reads YNSAVALDWLPGIFPI. A helical transmembrane segment spans residues 148-168; the sequence is LRSSSLPYQLTAPALALLLVF. At 169-315 the chain is on the lumenal, thylakoid side; it reads RTEASYSRYE…PLSYTRLTSR (147 aa). 2 consecutive transmembrane segments (helical) span residues 316–336 and 337–357; these read FLVF…HWIV and VPAT…GVLI. Residues 358–410 lie on the Lumenal, thylakoid side of the membrane; the sequence is EEPFPMLALDELCDLVHSNIQEAVKSEKVIRNRIIAKIKLHEFKHSSNGRHRS.

This sequence belongs to the anion channel-forming bestrophin (TC 1.A.46) family. Voltage-dependent chloride channel subfamily. Mostly expressed in flowers and leaves and, to a lower extent, in stems and roots.

The protein localises to the plastid. The protein resides in the chloroplast thylakoid membrane. It catalyses the reaction chloride(in) = chloride(out). More active at positive than at negative voltages. Repressed by the general anion channel inhibitors dithiocyanatostilbene-2,20-disulphonic acid (DIDS) and niflumic acid. Functionally, voltage-dependent chloride (Cl) channel critical for proton motive force (PMF) partitioning across the thylakoid membrane by anion influx into the lumen during illumination, thus being required for photoprotection under fluctuating light conditions. Influences thylakoid ultrastructure, including lumen size and organization. During photosynthetic response on transition from dark to low light, involved in a sequential mechanism of adaptation; VCCN1 and CLCe first trigger the activation of photoprotection, which is later down-regulated by KEA3 to a low steady state, while adjusting electron transport. On transition from low to high light, accelerates the activation of photoprotection by building up a pH gradient across the thylakoid membrane. This chain is Voltage-dependent chloride channel 1, chloroplastic, found in Arabidopsis thaliana (Mouse-ear cress).